The primary structure comprises 351 residues: Molybdenum import ATP-binding protein ModC (351 aa).

Positions 1–229 (MLEINIHQQL…DILADWQSET (229 aa)) constitute an ABC transporter domain. ATP is bound at residue 31–38 (GRSGAGKS). The Mop domain occupies 290–351 (HSSIRNILNG…IYVQIKSVSL (62 aa)).

Belongs to the ABC transporter superfamily. Molybdate importer (TC 3.A.1.8) family. The complex is composed of two ATP-binding proteins (ModC), two transmembrane proteins (ModB) and a solute-binding protein (ModA).

It localises to the cell inner membrane. It carries out the reaction molybdate(out) + ATP + H2O = molybdate(in) + ADP + phosphate + H(+). In terms of biological role, part of the ABC transporter complex ModABC involved in molybdenum import. Responsible for energy coupling to the transport system. In Haemophilus ducreyi (strain 35000HP / ATCC 700724), this protein is Molybdenum import ATP-binding protein ModC.